The chain runs to 457 residues: Cysteine--tRNA ligase (457 aa).

Cys31 provides a ligand contact to Zn(2+). The 'HIGH' region motif lies at 33-43; the sequence is PTVYNYAHIGN. The Zn(2+) site is built by Cys211, His236, and Glu240. The 'KMSKS' region signature appears at 269-273; sequence KMSKS. Lys272 contacts ATP.

The protein belongs to the class-I aminoacyl-tRNA synthetase family. Monomer. The cofactor is Zn(2+).

The protein resides in the cytoplasm. The catalysed reaction is tRNA(Cys) + L-cysteine + ATP = L-cysteinyl-tRNA(Cys) + AMP + diphosphate. In Xanthomonas campestris pv. campestris (strain ATCC 33913 / DSM 3586 / NCPPB 528 / LMG 568 / P 25), this protein is Cysteine--tRNA ligase.